Here is a 324-residue protein sequence, read N- to C-terminus: MIRSIIRGVGSALPKRSLSNDELAKFVETSDAWIVQRTGIHQRYIANENETTVSLGVKAAQAALINAGLTIKDIDCIILATSTPNRTFPASAVEIQYALGMNHGFAFDIQAVCSGFIFALTTGDSYLRCGAAKRILVIGSDTFSRILDWEDRTTCVLFGDGAGAAVLEAEEIEGGIAFQRGILSAKLRSDGAYIDKLYVDGGPSTTQTTGYLRMEGREVFKYAVGMITDVVDDCFAAAGMDSSQLDWFVPHQANKRIIEASAKKLKISSDKVVITVDKHGNTSAASVPLALTTALCDGRIKRGDLIMLEAMGGGFTWGAILIRW.

Catalysis depends on residues Cys-113 and His-251. The segment at 252-256 (QANKR) is ACP-binding. Asn-281 is an active-site residue.

It belongs to the thiolase-like superfamily. FabH family. As to quaternary structure, homodimer.

It localises to the cytoplasm. It carries out the reaction malonyl-[ACP] + acetyl-CoA + H(+) = 3-oxobutanoyl-[ACP] + CO2 + CoA. The protein operates within lipid metabolism; fatty acid biosynthesis. In terms of biological role, catalyzes the condensation reaction of fatty acid synthesis by the addition to an acyl acceptor of two carbons from malonyl-ACP. Catalyzes the first condensation reaction which initiates fatty acid synthesis and may therefore play a role in governing the total rate of fatty acid production. Possesses both acetoacetyl-ACP synthase and acetyl transacylase activities. Its substrate specificity determines the biosynthesis of branched-chain and/or straight-chain of fatty acids. This chain is Beta-ketoacyl-[acyl-carrier-protein] synthase III, found in Bartonella tribocorum (strain CIP 105476 / IBS 506).